Reading from the N-terminus, the 399-residue chain is MAATTAAVVAEEDTELRDLLVQTLENSGVLNRIKAELRAAVFLALEEQEKVENKTPLVNESLKKFLNTKDGRLVASLVAEFLQFFNLDFTLAVFHPETSTIQGLEGRENLARDLGIIEAEGTVGGPLLLEVIRRCQQKEKGPTSVEGALDLSDGHPPSKSPEGKTSVNSTPSKIPRYKGQGKKKTSGQKSGDKKTSSETSQSEPSVSLSESKSKSSLHSLVHETRIASFLSNSTVDAKDKSALCPDEDDVEGDSFFDDPIPKPEKTYGWRSEPRKQVGGLASLSDKPHLRSGLSSLAGAPSLTDAESKRGSTVLKDLKLVGEKIGSLGLGSGEDEDYVDDFNSASHRSEKSELSIGEEIEEDLSMGVEDVNTSDKLDDLTQDLTVSQLSDVADYLEDVA.

In terms of domain architecture, LisH spans 70-102 (DGRLVASLVAEFLQFFNLDFTLAVFHPETSTIQ). Positions 139–217 (EKGPTSVEGA…LSESKSKSSL (79 aa)) are disordered. Thr-143 is modified (phosphothreonine). Residues Ser-152 and Ser-160 each carry the phosphoserine modification. The segment covering 163–172 (GKTSVNSTPS) has biased composition (polar residues). Residue Thr-170 is modified to Phosphothreonine. Positions 175–186 (PRYKGQGKKKTS) are enriched in basic residues. Residues 197–217 (SETSQSEPSVSLSESKSKSSL) show a composition bias toward low complexity. A Phosphoserine modification is found at Ser-202. Thr-234 is modified (phosphothreonine). A disordered region spans residues 239–309 (DKSALCPDED…PSLTDAESKR (71 aa)). Residues 245–256 (PDEDDVEGDSFF) show a composition bias toward acidic residues. The span at 259 to 275 (PIPKPEKTYGWRSEPRK) shows a compositional bias: basic and acidic residues. Over residues 290–302 (RSGLSSLAGAPSL) the composition is skewed to low complexity. Ser-301, Ser-326, and Ser-331 each carry phosphoserine. Residues 328-357 (GLGSGEDEDYVDDFNSASHRSEKSELSIGE) are disordered. Phosphotyrosine is present on Tyr-337.

It belongs to the CEP43 family. As to quaternary structure, homodimer. Part of a ternary complex that contains CEP350, CEP43 and MAPRE1. Interacts directly with CEP350 and MAPRE1. Interacts with CEP19. Interacts (via N-terminus) with CEP350 (via C-terminus).

Its subcellular location is the cytoplasm. It localises to the cytoskeleton. It is found in the microtubule organizing center. The protein resides in the centrosome. The protein localises to the centriole. Its subcellular location is the cilium basal body. Its function is as follows. Required for anchoring microtubules to the centrosomes. Required for ciliation. The polypeptide is Centrosomal protein 43 (Cep43) (Rattus norvegicus (Rat)).